Here is a 78-residue protein sequence, read N- to C-terminus: Acyl carrier protein (78 aa).

The Carrier domain occupies 2–77 (SDIADRVKKI…DAIKFLEKNS (76 aa)). At Ser37 the chain carries O-(pantetheine 4'-phosphoryl)serine.

The protein belongs to the acyl carrier protein (ACP) family. In terms of processing, 4'-phosphopantetheine is transferred from CoA to a specific serine of apo-ACP by AcpS. This modification is essential for activity because fatty acids are bound in thioester linkage to the sulfhydryl of the prosthetic group.

It is found in the cytoplasm. The protein operates within lipid metabolism; fatty acid biosynthesis. In terms of biological role, carrier of the growing fatty acid chain in fatty acid biosynthesis. This chain is Acyl carrier protein, found in Methylobacterium sp. (strain 4-46).